Here is a 325-residue protein sequence, read N- to C-terminus: Aldo-keto reductase family 1 member D1 (325 aa).

Residues 22-26 (GLGTY) and Asp52 each bind NADP(+). Tyr26 lines the substrate pocket. Substrate contacts are provided by Tyr57, Trp88, Glu119, and Tyr131. The active-site Proton donor is the Tyr57. NADP(+) contacts are provided by residues 168–169 (SN), Gln192, and 218–223 (HSPLGT). The residue at position 228 (Ser228) is a Phosphoserine. Residue Trp229 coordinates substrate. 272–282 (KSFTPERIKEN) serves as a coordination point for NADP(+).

Belongs to the aldo/keto reductase family.

The protein localises to the cytoplasm. The enzyme catalyses 5beta-cholestan-3-one + NADP(+) = cholest-4-en-3-one + NADPH + H(+). The catalysed reaction is 4,5beta-dihydrocortisone + NADP(+) = cortisone + NADPH + H(+). It carries out the reaction cortisol + NADPH + H(+) = 5beta-dihydrocortisol + NADP(+). It catalyses the reaction corticosterone + NADPH + H(+) = 5beta-dihydrocorticosterone + NADP(+). The enzyme catalyses 7alpha,12alpha-dihydroxycholest-4-en-3-one + NADPH + H(+) = 7alpha,12alpha-dihydroxy-5beta-cholestan-3-one + NADP(+). The catalysed reaction is 7alpha-hydroxycholest-4-en-3-one + NADPH + H(+) = 7alpha-hydroxy-5beta-cholestan-3-one + NADP(+). It carries out the reaction epitestosterone + NADPH + H(+) = 5beta-dihydroepitestosterone + NADP(+). It catalyses the reaction androst-4-ene-3,17-dione + NADPH + H(+) = 5beta-androstane-3,17-dione + NADP(+). The enzyme catalyses progesterone + NADPH + H(+) = 5beta-pregnan-3,20-dione + NADP(+). The catalysed reaction is 21-hydroxyprogesterone + NADPH + H(+) = 5beta-dihydrodeoxycorticosterone + NADP(+). It carries out the reaction aldosterone + NADPH + H(+) = 5beta-dihydroaldosterone + NADP(+). It catalyses the reaction 17beta-hydroxyandrosta-1,4-dien-3-one + NADPH + H(+) = 17beta-hydroxy-5beta-androst-1-en-3-one + NADP(+). The enzyme catalyses 17beta-hydroxyestr-4-en-3-one + NADPH + H(+) = 17beta-hydroxy-5beta-estran-3-one + NADP(+). The catalysed reaction is 5beta-dihydrotestosterone + NADP(+) = testosterone + NADPH + H(+). It carries out the reaction androst-4-ene-3,11,17-trione + NADPH + H(+) = 17beta-hydroxyandrost-4-ene-3,11-dione + NADP(+). Its activity is regulated as follows. Subject to inhibition by high substrate concentrations. Inhibited by testosterone concentrations above 10 uM. Inhibited by the primary and secondary bile acids chenodeoxycholic acid and ursodeoxycholic acid. Functionally, catalyzes the stereospecific NADPH-dependent reduction of the C4-C5 double bond of bile acid intermediates and steroid hormones carrying a delta(4)-3-one structure to yield an A/B cis-ring junction. This cis-configuration is crucial for bile acid biosynthesis and plays important roles in steroid metabolism. Capable of reducing a broad range of delta-(4)-3-ketosteroids from C18 (such as, 17beta-hydroxyestr-4-en-3-one) to C27 (such as, 7alpha-hydroxycholest-4-en-3-one). The protein is Aldo-keto reductase family 1 member D1 (Akr1d1) of Mus musculus (Mouse).